The chain runs to 293 residues: Large ribosomal subunit protein uL2c (293 aa).

Positions 224–245 (VMNPVDHPHGGGEGKSPIGRAR) are disordered.

This sequence belongs to the universal ribosomal protein uL2 family. In terms of assembly, part of the 50S ribosomal subunit.

It is found in the plastid. It localises to the chloroplast. This is Large ribosomal subunit protein uL2c (rpl2) from Pyropia yezoensis (Susabi-nori).